The following is a 173-amino-acid chain: Crossover junction endodeoxyribonuclease RuvC (173 aa).

Active-site residues include Asp11, Glu71, and Asp143. Positions 11, 71, and 143 each coordinate Mg(2+).

Belongs to the RuvC family. Homodimer which binds Holliday junction (HJ) DNA. The HJ becomes 2-fold symmetrical on binding to RuvC with unstacked arms; it has a different conformation from HJ DNA in complex with RuvA. In the full resolvosome a probable DNA-RuvA(4)-RuvB(12)-RuvC(2) complex forms which resolves the HJ. Requires Mg(2+) as cofactor.

The protein resides in the cytoplasm. The catalysed reaction is Endonucleolytic cleavage at a junction such as a reciprocal single-stranded crossover between two homologous DNA duplexes (Holliday junction).. The RuvA-RuvB-RuvC complex processes Holliday junction (HJ) DNA during genetic recombination and DNA repair. Endonuclease that resolves HJ intermediates. Cleaves cruciform DNA by making single-stranded nicks across the HJ at symmetrical positions within the homologous arms, yielding a 5'-phosphate and a 3'-hydroxyl group; requires a central core of homology in the junction. The consensus cleavage sequence is 5'-(A/T)TT(C/G)-3'. Cleavage occurs on the 3'-side of the TT dinucleotide at the point of strand exchange. HJ branch migration catalyzed by RuvA-RuvB allows RuvC to scan DNA until it finds its consensus sequence, where it cleaves and resolves the cruciform DNA. In Brucella suis biovar 1 (strain 1330), this protein is Crossover junction endodeoxyribonuclease RuvC.